Reading from the N-terminus, the 166-residue chain is Putative transmembrane protein ORF166 (166 aa).

The next 3 membrane-spanning stretches (helical) occupy residues 35–55 (IILV…FAGL), 60–80 (PICV…FVTA), and 124–144 (IFCL…AFIN).

The protein resides in the host membrane. The chain is Putative transmembrane protein ORF166 from Acidianus convivator (ABV).